Reading from the N-terminus, the 329-residue chain is 4-hydroxythreonine-4-phosphate dehydrogenase (329 aa).

Substrate-binding residues include histidine 136 and threonine 137. Residues histidine 166, histidine 211, and histidine 266 each coordinate a divalent metal cation. Residues lysine 274, asparagine 283, and arginine 292 each coordinate substrate.

It belongs to the PdxA family. As to quaternary structure, homodimer. It depends on Zn(2+) as a cofactor. Mg(2+) is required as a cofactor. Co(2+) serves as cofactor.

It is found in the cytoplasm. The enzyme catalyses 4-(phosphooxy)-L-threonine + NAD(+) = 3-amino-2-oxopropyl phosphate + CO2 + NADH. The protein operates within cofactor biosynthesis; pyridoxine 5'-phosphate biosynthesis; pyridoxine 5'-phosphate from D-erythrose 4-phosphate: step 4/5. Its function is as follows. Catalyzes the NAD(P)-dependent oxidation of 4-(phosphooxy)-L-threonine (HTP) into 2-amino-3-oxo-4-(phosphooxy)butyric acid which spontaneously decarboxylates to form 3-amino-2-oxopropyl phosphate (AHAP). The chain is 4-hydroxythreonine-4-phosphate dehydrogenase from Citrobacter koseri (strain ATCC BAA-895 / CDC 4225-83 / SGSC4696).